The chain runs to 209 residues: Dof zinc finger protein DOF1.6 (209 aa).

The span at 1-17 (MPSEPNQTRPTRVQPST) shows a compositional bias: polar residues. A disordered region spans residues 1–29 (MPSEPNQTRPTRVQPSTAAYPPPNLAEPL). The segment covering 20 to 29 (YPPPNLAEPL) has biased composition (pro residues). Residues 29–83 (LPCPRCNSTTTKFCYYNNYNLAQPRYYCKSCRRYWTQGGTLRDVPVGGGTRRSSS) form a Dof-type zinc finger. 4 residues coordinate Zn(2+): C31, C34, C56, and C59. A disordered region spans residues 70–116 (RDVPVGGGTRRSSSKRHRSFSTTATSSSSSSSVITTTTQEPATTEAS). Over residues 89–116 (FSTTATSSSSSSSVITTTTQEPATTEAS) the composition is skewed to low complexity.

The protein resides in the nucleus. Its function is as follows. Transcription factor that binds specifically to a 5'-AA[AG]G-3' consensus core sequence. The protein is Dof zinc finger protein DOF1.6 (DOF1.6) of Arabidopsis thaliana (Mouse-ear cress).